We begin with the raw amino-acid sequence, 331 residues long: FMRFamide-related neuropeptides (331 aa).

An N-terminal signal peptide occupies residues 1–25 (MRCWSPCSLLVVIAIYCLSSHTSEA). The propeptide occupies 26 to 65 (FDLAQACVESQRLSLLPICDTIFAVQQEGAQQSADDGLRS). 2 positions are modified to phenylalanine amide: phenylalanine 71 and phenylalanine 83. The propeptide occupies 86 to 94 (NVPDLPFED). Phenylalanine 100 carries the post-translational modification Phenylalanine amide. Residues 103–168 (AAPQLDDLLK…YVDDVEDSDV (66 aa)) constitute a propeptide that is removed on maturation. The interval 122–153 (QKSDDTSVRRKRSTDAAPQSNTDSAEQKNDSA) is disordered. Residues phenylalanine 174 and phenylalanine 181 each carry the phenylalanine amide modification. The propeptide occupies 184–194 (NPSDVGSKLTE). Phenylalanine 200 is modified (phenylalanine amide). The propeptide occupies 203-205 (DPE). Phenylalanine amide is present on phenylalanine 211. Residues 214-216 (SDD) constitute a propeptide that is removed on maturation. Position 222 is a phenylalanine amide (phenylalanine 222). A propeptide spanning residues 225-236 (NPGDAEDELEED) is cleaved from the precursor. Phenylalanine 242 carries the phenylalanine amide modification. Residues 245 to 254 (GDEEDEEEAE) constitute a propeptide that is removed on maturation. Phenylalanine amide is present on phenylalanine 260. A propeptide spanning residues 263-265 (DPE) is cleaved from the precursor. Phenylalanine 271 carries the phenylalanine amide modification. A propeptide spanning residues 274 to 277 (NGEE) is cleaved from the precursor. Phenylalanine 283 carries the phenylalanine amide modification. The propeptide occupies 286–293 (NPEEPEAD). Phenylalanine amide is present on phenylalanine 299. Residues 302 to 312 (GGEEDDVNTEE) constitute a propeptide that is removed on maturation. Phenylalanine amide is present on phenylalanine 318. Positions 321–331 (SAEKCKGCLEG) are excised as a propeptide.

The protein belongs to the FARP (FMRFamide related peptide) family. Present ubiquitously in the brain and regions of the central nervous system as well as in the periphery and throughout the dermal chromatophore layer (at protein level).

It is found in the secreted. Excitatory neurotransmitters that directly modulate chromatophore function by activating chromatophore expansion at the chromatophore neuromuscular junction. This is FMRFamide-related neuropeptides from Sepia officinalis (Common cuttlefish).